The chain runs to 622 residues: Iron transport multicopper oxidase FET3 (622 aa).

A signal peptide spans 1-22 (MRPKLLSVEAALFLALPELARA). Topologically, residues 23–553 (ATRKFDFEIG…NTLPPGFTPR (531 aa)) are extracellular. Plastocyanin-like domains lie at 31 to 146 (IGWV…VHDK), 156 to 303 (EEVV…VYDK), and 363 to 498 (YTEA…VEDP). N-linked (GlcNAc...) asparagine glycosylation is present at asparagine 76. Cu cation contacts are provided by histidine 82 and histidine 84. N-linked (GlcNAc...) asparagine glycosylation is found at asparagine 89 and asparagine 114. Histidine 126 and histidine 128 together coordinate Cu cation. Residues asparagine 196, asparagine 200, and asparagine 294 are each glycosylated (N-linked (GlcNAc...) asparagine). Cu cation contacts are provided by histidine 414, histidine 417, and histidine 419. The N-linked (GlcNAc...) asparagine glycan is linked to asparagine 440. Histidine 479, cysteine 480, histidine 481, and histidine 485 together coordinate Cu cation. The helical transmembrane segment at 554–574 (GIVALVFSCICGILGVAVVAW) threads the bilayer. Over 575–622 (YGFSAPVGSTSAGALSAGLVENDSGDVHSAQKGPQETVVSPTGDARSH) the chain is Cytoplasmic. Positions 597-622 (DSGDVHSAQKGPQETVVSPTGDARSH) are disordered.

This sequence belongs to the multicopper oxidase family.

The protein resides in the cell membrane. Cell surface ferroxidase; part of the reductive iron assimilatory system (RIA), a siderophore-independent iron acquisition process. Required to oxidize Fe(2+) and release it from the transporter. Seems not to be involved in virulence. The protein is Iron transport multicopper oxidase FET3 of Gibberella zeae (strain ATCC MYA-4620 / CBS 123657 / FGSC 9075 / NRRL 31084 / PH-1) (Wheat head blight fungus).